The chain runs to 79 residues: Ponericin-W-like 32.1 (79 aa).

The signal sequence occupies residues 1 to 23; it reads MKCKKQLLVIFFAYFLVVNESEA. Residues 49-79 constitute a propeptide that is removed on maturation; the sequence is RALMKRDLEDIMDPYQKNLKLDRYLRRLAMD.

Belongs to the non-disulfide-bridged peptide (NDBP) superfamily. Medium-length antimicrobial peptide (group 3) family. Ponericin-W subfamily. In terms of tissue distribution, expressed by the venom gland.

It localises to the secreted. It is found in the target cell membrane. Its function is as follows. Antimicrobial peptide with potent activity against a range of Gram-positive and Gram-negative bacteria. Has high hemolytic activity against erythrocytes. May act by disrupting the integrity of the bacterial cell membrane. This Lychas mucronatus (Chinese swimming scorpion) protein is Ponericin-W-like 32.1.